Consider the following 585-residue polypeptide: Glutamate decarboxylase 2 (585 aa).

Low complexity predominate over residues 1-14 (MASPGSGFWSFGSE). The disordered stretch occupies residues 1–24 (MASPGSGFWSFGSEDGSGDSENPG). Serine 3, serine 6, serine 10, and serine 13 each carry phosphoserine. S-palmitoyl cysteine attachment occurs at residues cysteine 30 and cysteine 45. Residue 181 to 183 (QLS) participates in substrate binding. Lysine 396 carries the post-translational modification N6-(pyridoxal phosphate)lysine. Arginine 558 contacts substrate.

It belongs to the group II decarboxylase family. In terms of assembly, homodimer. Pyridoxal 5'-phosphate is required as a cofactor. Post-translationally, phosphorylated; which does not affect kinetic parameters or subcellular location. In terms of processing, palmitoylated; which is required for presynaptic clustering.

The protein resides in the cytoplasm. The protein localises to the cytosol. It is found in the cytoplasmic vesicle. It localises to the presynaptic cell membrane. Its subcellular location is the golgi apparatus membrane. The catalysed reaction is L-glutamate + H(+) = 4-aminobutanoate + CO2. Catalyzes the production of GABA. In Homo sapiens (Human), this protein is Glutamate decarboxylase 2.